The primary structure comprises 510 residues: ATP synthase subunit alpha (510 aa).

169 to 176 (GDRQTGKT) lines the ATP pocket.

This sequence belongs to the ATPase alpha/beta chains family. As to quaternary structure, F-type ATPases have 2 components, CF(1) - the catalytic core - and CF(0) - the membrane proton channel. CF(1) has five subunits: alpha(3), beta(3), gamma(1), delta(1), epsilon(1). CF(0) has three main subunits: a(1), b(2) and c(9-12). The alpha and beta chains form an alternating ring which encloses part of the gamma chain. CF(1) is attached to CF(0) by a central stalk formed by the gamma and epsilon chains, while a peripheral stalk is formed by the delta and b chains.

The protein localises to the cell inner membrane. It carries out the reaction ATP + H2O + 4 H(+)(in) = ADP + phosphate + 5 H(+)(out). Functionally, produces ATP from ADP in the presence of a proton gradient across the membrane. The alpha chain is a regulatory subunit. The sequence is that of ATP synthase subunit alpha from Anaeromyxobacter sp. (strain K).